The following is a 168-amino-acid chain: Peptidoglycan-associated lipoprotein (168 aa).

The signal sequence occupies residues 1-24 (MGRIAALTRNPVMIALVAMLAIAG). C25 carries N-palmitoyl cysteine lipidation. The S-diacylglycerol cysteine moiety is linked to residue C25. Residues 50–167 (AQDFTVNIGD…RAVTTLSGAG (118 aa)) enclose the OmpA-like domain.

This sequence belongs to the Pal lipoprotein family. In terms of assembly, the Tol-Pal system is composed of five core proteins: the inner membrane proteins TolA, TolQ and TolR, the periplasmic protein TolB and the outer membrane protein Pal. They form a network linking the inner and outer membranes and the peptidoglycan layer.

The protein localises to the cell outer membrane. Its function is as follows. Part of the Tol-Pal system, which plays a role in outer membrane invagination during cell division and is important for maintaining outer membrane integrity. This Mesorhizobium japonicum (strain LMG 29417 / CECT 9101 / MAFF 303099) (Mesorhizobium loti (strain MAFF 303099)) protein is Peptidoglycan-associated lipoprotein.